A 547-amino-acid polypeptide reads, in one-letter code: Chaperonin GroEL (547 aa).

Residues 30–33 (TLGP), K51, 87–91 (DGTTT), G415, and D495 each bind ATP.

It belongs to the chaperonin (HSP60) family. Forms a cylinder of 14 subunits composed of two heptameric rings stacked back-to-back. Interacts with the co-chaperonin GroES.

It localises to the cytoplasm. It catalyses the reaction ATP + H2O + a folded polypeptide = ADP + phosphate + an unfolded polypeptide.. In terms of biological role, together with its co-chaperonin GroES, plays an essential role in assisting protein folding. The GroEL-GroES system forms a nano-cage that allows encapsulation of the non-native substrate proteins and provides a physical environment optimized to promote and accelerate protein folding. In Rhizobium leguminosarum bv. trifolii (strain WSM2304), this protein is Chaperonin GroEL.